Here is a 2718-residue protein sequence, read N- to C-terminus: E3 SUMO-protein ligase RanBP2 (2718 aa).

Residues 1–100 (MFTTRKEVDA…DPRQSEVVID (100 aa)) form a sufficient for interaction with Hsp83 region. A sufficient for interaction with piwi region spans residues 1–200 (MFTTRKEVDA…EKMKIDQAFN (200 aa)). 2 TPR repeats span residues 26 to 58 (DIKGLAVARLYMKVQEYPKAIEYLNGYLRVRDD) and 59 to 94 (AVGHNMIATCYSRLNPPDVTEALQHYQRSIQIDPRQ). Disordered regions lie at residues 796 to 816 (QQDRNSRGIDNSFGSPDVHNN) and 937 to 959 (EHQQQQQHQQQQSHNQGAIHPVV). Residues 803 to 816 (GIDNSFGSPDVHNN) show a composition bias toward polar residues. Residues 808–809 (FG) form repeat 1. A 27 X 2 AA repeats of F-G region spans residues 808 to 2581 (FGSPDVHNNS…GEENETKLFG (1774 aa)). Residues 938 to 948 (HQQQQQHQQQQ) are compositionally biased toward low complexity. A run of 3 repeats spans residues 1028–1029 (FG), 1035–1036 (FG), and 1104–1105 (FG). The segment at 1181-1208 (QPVEKEPPANVVITSSDPLPKPTTASVQ) is disordered. Positions 1192–1208 (VITSSDPLPKPTTASVQ) are enriched in polar residues. Repeat 5 spans residues 1252 to 1253 (FG). Disordered stretches follow at residues 1263 to 1314 (FKTQ…KPII) and 1483 to 1502 (NKPQEQTKTQPNPDPPATAA). Residues 1284–1299 (NQSGATDPNKTLPQDT) show a composition bias toward polar residues. The RanBD1 1 domain maps to 1309-1445 (DFKPIIPLPD…FTKASEAAKS (137 aa)). The segment covering 1483–1493 (NKPQEQTKTQP) has biased composition (polar residues). Tandem repeats lie at residues 1506–1507 (FG), 1539–1540 (FG), 1547–1548 (FG), and 1552–1553 (FG). The region spanning 1605-1742 (QFVPVIALPD…VQKAQQSIGN (138 aa)) is the RanBD1 2 domain. The tract at residues 1738 to 1761 (QSIGNEPKKEEVPSAAGEKEKPIK) is disordered. The segment covering 1743–1760 (EPKKEEVPSAAGEKEKPI) has biased composition (basic and acidic residues). The stretch at 1763–1764 (FG) is repeat 10. The RanBP2-type 1 zinc-finger motif lies at 1770–1799 (KAGSWNCQACYTNNGQDQLYCLACQEPKDA). 4 repeat units span residues 1826 to 1827 (FG), 1842 to 1843 (FG), 1874 to 1875 (FG), and 1883 to 1884 (FG). The RanBP2-type 2 zinc finger occupies 1890-1919 (AVGSWSCSACYVNNPGESLYCSACDAPKND). Repeat copies occupy residues 1942 to 1943 (FG) and 1944 to 1945 (FG). Disordered stretches follow at residues 1981 to 2021 (FTFS…TYFS), 2154 to 2204 (EDSP…THEV), and 2239 to 2273 (SLSRNNSSASEASKTPSSAFIFGSTDKSEPGKDAG). Residues 2002 to 2016 (EDEDNDSQEVEEEEN) are compositionally biased toward acidic residues. Residues 2019–2151 (YFSPVIPLPD…IKNALNETAK (133 aa)) enclose the RanBD1 3 domain. Residues 2161–2175 (SVSQSTEANKPSQKN) are compositionally biased toward polar residues. Residues 2239–2257 (SLSRNNSSASEASKTPSSA) show a composition bias toward low complexity. 11 consecutive repeat copies span residues 2260–2261 (FG), 2313–2314 (FG), 2332–2333 (FG), 2352–2353 (FG), 2360–2361 (FG), 2366–2367 (FG), 2393–2394 (FG), 2399–2400 (FG), 2415–2416 (FG), 2421–2422 (FG), and 2580–2581 (FG). Residues 2320 to 2346 (AEQQKKDSSESVFGGNKADSQSPATQE) form a disordered region. Residues 2556–2699 (HYDAIVELPD…VNSCIKRAKA (144 aa)) enclose the RanBD1 4 domain.

It belongs to the RanBP2 E3 ligase family. Part of the nuclear pore complex. Forms a complex with Nxt1, sbr/Nxf1 and RanGAP. Interacts (via TPR repeats) with Hsp83; the interaction is required for the nuclear import of the sesquiterpenoid juvenile hormone receptor Met. Interacts (via N-terminus) with piwi. In terms of tissue distribution, expressed in both oocytes and nurse cells (at protein level).

Its subcellular location is the nucleus. The protein resides in the nuclear pore complex. Functionally, E3 SUMO-protein ligase. Component of the nuclear pore complex (NPC), a complex required for trafficking across the nuclear envelope. Required for nuclear import of nuclear localization signal (NLS)-containing proteins in an importin alpha/importin beta-dependent manner, but also for the nuclear import of specific proteins such as phosphorylated Mad or the sesquiterpenoid juvenile hormone receptor Met as part of the juvenile hormone signal transduction pathway. Plays a role in nuclear mRNA export by recruiting the mRNA transport complex composed of Nxt1 and sbr/Nxf1 to the NPC. Essential during germline development for transposon silencing and piRNA biogenesis probably by regulating piwi localization to the nucleus. During oogenesis, required to form granules that modulate the biogenesis of annulate lamellae containing nuclear pore complex components. This chain is E3 SUMO-protein ligase RanBP2, found in Drosophila melanogaster (Fruit fly).